Reading from the N-terminus, the 143-residue chain is MTEPRTPEKLLAAKPPVLHHNSHSPNASLQLPSPIITRRTRTASTSARALENPVVTGMVKSFSRTKGHGFITPNAGGEDVFCHVSDIEGEYVPMPGDEVKYRLCAIPPKYEKHQAVHVQISHLTPEVHHKWEEPFYGGSSPAK.

Residues Met1 to Gln30 are disordered. Ser22, Ser24, Ser28, and Ser33 each carry phosphoserine. In terms of domain architecture, CSD spans Val54 to Ser121. 2 positions are modified to phosphoserine: Ser139 and Ser140.

This chain is Cold shock domain-containing protein CG9705, found in Drosophila melanogaster (Fruit fly).